The following is a 388-amino-acid chain: Protein-glutamate methylesterase/protein-glutamine glutaminase 4 (388 aa).

In terms of domain architecture, Response regulatory spans 4 to 121 (KVLVVDDSGF…SGDASKIKRL (118 aa)). Asp-55 is modified (4-aspartylphosphate). The tract at residues 137–196 (SGASAPASVPQPAKPAAPIPVREPPKPAAPVTRPAEPRAKAPPAKPEPKPEVKAAKSRRT) is disordered. Residues 148 to 164 (PAKPAAPIPVREPPKPA) are compositionally biased toward pro residues. The CheB-type methylesterase domain occupies 197–388 (PRQDYKVVLI…FAPRLIDGVG (192 aa)). Residues Ser-209, His-236, and Asp-332 contribute to the active site.

It belongs to the CheB family. Post-translationally, phosphorylated by CheA. Phosphorylation of the N-terminal regulatory domain activates the methylesterase activity.

Its subcellular location is the cytoplasm. It carries out the reaction [protein]-L-glutamate 5-O-methyl ester + H2O = L-glutamyl-[protein] + methanol + H(+). The enzyme catalyses L-glutaminyl-[protein] + H2O = L-glutamyl-[protein] + NH4(+). Functionally, involved in chemotaxis. Part of a chemotaxis signal transduction system that modulates chemotaxis in response to various stimuli. Catalyzes the demethylation of specific methylglutamate residues introduced into the chemoreceptors (methyl-accepting chemotaxis proteins or MCP) by CheR. Also mediates the irreversible deamidation of specific glutamine residues to glutamic acid. This Hahella chejuensis (strain KCTC 2396) protein is Protein-glutamate methylesterase/protein-glutamine glutaminase 4.